Consider the following 346-residue polypeptide: Cyclin-dependent kinase 20 (346 aa).

The Protein kinase domain maps to 4–288 (YCILGRIGEG…ASQALLHQYF (285 aa)). ATP-binding positions include 10 to 18 (IGEGAHGIV) and K33. D127 (proton acceptor) is an active-site residue. The disordered stretch occupies residues 298-324 (SELPIPQRPGGPAPKAHPGPPHVHDFH). The span at 303–318 (PQRPGGPAPKAHPGPP) shows a compositional bias: pro residues.

The protein belongs to the protein kinase superfamily. CMGC Ser/Thr protein kinase family. CDC2/CDKX subfamily. As to quaternary structure, monomer. Interacts with MAK. Interacts with TBC1D32.

The protein localises to the nucleus. It is found in the cytoplasm. The protein resides in the cell projection. It localises to the cilium. It catalyses the reaction L-seryl-[protein] + ATP = O-phospho-L-seryl-[protein] + ADP + H(+). It carries out the reaction L-threonyl-[protein] + ATP = O-phospho-L-threonyl-[protein] + ADP + H(+). Its function is as follows. Involved in cell growth. Activates CDK2, a kinase involved in the control of the cell cycle, by phosphorylating residue 'Thr-160'. Required for high-level Shh responses in the developing neural tube. Together with TBC1D32, controls the structure of the primary cilium by coordinating assembly of the ciliary membrane and axoneme, allowing GLI2 to be properly activated in response to SHH signaling. This chain is Cyclin-dependent kinase 20 (Cdk20), found in Mus musculus (Mouse).